A 1039-amino-acid polypeptide reads, in one-letter code: Antigen 43 (1039 aa).

The N-terminal stretch at 1–52 (MKRHLNTCYRLVWNHMTGAFVVASELARARGKRGGVAVALSLAAVTSLPVLA) is a signal peptide. The region spanning 737-1039 (VNGENNSVRL…NGQATLNVTF (303 aa)) is the Autotransporter domain.

In terms of assembly, interaction with TamA of the translocation and assembly module (TAM) initiates insertion in the outer membrane.

The protein resides in the periplasm. Its subcellular location is the secreted. It is found in the cell surface. The protein localises to the cell outer membrane. In terms of biological role, controls colony form variation and autoaggregation. May function as an adhesin. The chain is Antigen 43 (flu) from Escherichia coli (strain K12).